The following is a 110-amino-acid chain: DNA-binding protein Tneu_1679 (110 aa).

Belongs to the PDCD5 family.

In Pyrobaculum neutrophilum (strain DSM 2338 / JCM 9278 / NBRC 100436 / V24Sta) (Thermoproteus neutrophilus), this protein is DNA-binding protein Tneu_1679.